The chain runs to 190 residues: Putative 3-methyladenine DNA glycosylase (190 aa).

This sequence belongs to the DNA glycosylase MPG family.

This is Putative 3-methyladenine DNA glycosylase from Chlamydia abortus (strain DSM 27085 / S26/3) (Chlamydophila abortus).